The following is a 620-amino-acid chain: Glutathione-regulated potassium-efflux system protein KefC (620 aa).

The next 12 helical transmembrane spans lie at 4–24, 26–46, 54–74, 90–110, 114–134, 149–169, 178–198, 218–238, 270–290, 294–314, 327–347, and 359–379; these read HTLI…PIAV, LGLG…PWGL, SILH…GLEL, GALQ…LLGL, VAEL…MQAM, FAVL…IPLL, MGAF…VVLL, VFSA…EEVG, GLLL…GTLI, LRIV…LWLI, WFAV…GAAQ, and SLTL…VILN. Residues 399-518 form the RCK N-terminal domain; sequence QPRVIIAGFG…AGVEKPERET (120 aa). The disordered stretch occupies residues 597 to 620; sequence GWQGTEEGKHTGNMADEPETKPSS.

Belongs to the monovalent cation:proton antiporter 2 (CPA2) transporter (TC 2.A.37) family. KefC subfamily. In terms of assembly, homodimer. Interacts with the regulatory subunit KefF.

It localises to the cell inner membrane. In terms of biological role, pore-forming subunit of a potassium efflux system that confers protection against electrophiles. Catalyzes K(+)/H(+) antiport. This chain is Glutathione-regulated potassium-efflux system protein KefC, found in Escherichia coli O17:K52:H18 (strain UMN026 / ExPEC).